The primary structure comprises 325 residues: Serpentine receptor class gamma-16 (325 aa).

7 helical membrane-spanning segments follow: residues 25-45, 65-85, 87-107, 144-164, 187-207, 232-252, and 264-284; these read FCLY…ILLI, VVSL…MFIP, LCPL…MYYW, LAVT…WNLL, WASL…FTII, FVSL…LIFV, and LLFQ…IIML.

The protein belongs to the nematode receptor-like protein srg family.

Its subcellular location is the membrane. This is Serpentine receptor class gamma-16 (srg-16) from Caenorhabditis elegans.